The sequence spans 359 residues: C-X-C chemokine receptor type 4 (359 aa).

The tract at residues 1–23 is important for chemokine binding and signaling; it reads MEPISVSIYTSDNYSEEVGSGDY. Residues 1–40 are Extracellular-facing; it reads MEPISVSIYTSDNYSEEVGSGDYDSNKEPCFRDENVHFNR. A Sulfotyrosine modification is found at Tyr-9. The N-linked (GlcNAc...) asparagine glycan is linked to Asn-13. Tyr-14 is modified (sulfotyrosine). A glycan (O-linked (Xyl...) (chondroitin sulfate) serine) is linked at Ser-20. Position 23 is a sulfotyrosine (Tyr-23). Intrachain disulfides connect Cys-30–Cys-281 and Cys-111–Cys-193. Residues 41–65 traverse the membrane as a helical segment; sequence IFLPTIYFIIFLTGIVGNGLVILVM. Topologically, residues 66–79 are cytoplasmic; the sequence is GYQKKLRSMTDKYR. A helical transmembrane segment spans residues 80–101; it reads LHLSVADLLFVITLPFWAVDAM. Residues 96-99 form a chemokine binding region; the sequence is WAVD. Residues 102-112 are Extracellular-facing; the sequence is ADWYFGKFLCK. The helical transmembrane segment at 113-132 threads the bilayer; it reads AVHIIYTVNLYSSVLILAFI. Positions 115–119 are chemokine binding; sequence HIIYT. Topologically, residues 133–156 are cytoplasmic; it reads SLDRYLAIVHATNSQRPRKLLAEK. An Important for signaling motif is present at residues 135–137; it reads DRY. The segment at 137–149 is involved in dimerization; when bound to chemokine; it reads YLAIVHATNSQRP. The chain crosses the membrane as a helical span at residues 157 to 176; that stretch reads AVYVGVWIPALLLTIPDFIF. Topologically, residues 177-202 are extracellular; the sequence is ADVSQGDISQGDDRYICDRLYPDSLW. Residues 193–197 form a chemokine binding, important for signaling region; that stretch reads CDRLY. Positions 198–217 are involved in dimerization; that stretch reads PDSLWMVVFQFQHIMVGLIL. The helical transmembrane segment at 203-223 threads the bilayer; it reads MVVFQFQHIMVGLILPGIVIL. Topologically, residues 224–248 are cytoplasmic; that stretch reads SCYCIIISKLSHSKGHQKRKALKTT. Residues 249–268 traverse the membrane as a helical segment; the sequence is VILILAFFACWLPYYVGISI. Residues 269–289 are Extracellular-facing; it reads DSFILLGVIKQGCDFESIVHK. The segment at 273–275 is involved in dimerization; that stretch reads LLG. The helical transmembrane segment at 290–309 threads the bilayer; the sequence is WISITEALAFFHCCLNPILY. Over 310 to 359 the chain is Cytoplasmic; it reads AFLGAKFKSSAQHALNSMSRGSSLKILSKGKRGGHSSVSTESESSSFHSS. Phosphoserine occurs at positions 326 and 328. 2 positions are modified to phosphoserine; by PKC and GRK6: Ser-331 and Ser-332. The disordered stretch occupies residues 335–359; sequence ILSKGKRGGHSSVSTESESSSFHSS. Residue Ser-337 is modified to Phosphoserine; by GRK6. Residue Lys-338 forms a Glycyl lysine isopeptide (Lys-Gly) (interchain with G-Cter in ubiquitin) linkage. Residues 344–359 show a composition bias toward low complexity; sequence HSSVSTESESSSFHSS. The residue at position 346 (Ser-346) is a Phosphoserine; by GRK6. Phosphoserine occurs at positions 355 and 358.

Belongs to the G-protein coupled receptor 1 family. In terms of assembly, monomer. Can form homodimers. Interacts with CD164. Interacts with ARRB2; the interaction is dependent on the C-terminal phosphorylation of CXCR4 and allows activation of MAPK1 and MAPK3. Interacts with ARR3; the interaction is dependent on the C-terminal phosphorylation of CXCR4 and modulates calcium mobilization. Interacts with RNF113A; the interaction, enhanced by CXCL12, promotes CXCR4 ubiquitination and subsequent degradation. Interacts (via the cytoplasmic C-terminal) with ITCH (via the WW domains I and II); the interaction, enhanced by CXCL12, promotes CXCR4 ubiquitination and leads to its degradation. Interacts with extracellular ubiquitin. Interacts with DBN1; this interaction is enhanced by antigenic stimulation. Following LPS binding, may form a complex with GDF5, HSP90AA1 and HSPA8. In terms of processing, phosphorylated on agonist stimulation. Rapidly phosphorylated on serine and threonine residues in the C-terminal. Phosphorylation at Ser-331 and Ser-332 leads to recruitment of ITCH, ubiquitination and protein degradation. Post-translationally, ubiquitinated after ligand binding, leading to its degradation. Ubiquitinated by ITCH at the cell membrane on agonist stimulation. The ubiquitin-dependent mechanism, endosomal sorting complex required for transport (ESCRT), then targets CXCR4 for lysosomal degradation. This process is dependent also on prior Ser-/Thr-phosphorylation in the C-terminal of CXCR4. Also binding of ARRB1 to STAM negatively regulates CXCR4 sorting to lysosomes though modulating ubiquitination of SFR5S. Sulfation is required for efficient binding of CXCL12/SDF-1alpha and promotes its dimerization. In terms of processing, O- and N-glycosylated. N-glycosylation can mask coreceptor function. The O-glycosylation chondroitin sulfate attachment does not affect interaction with CXCL12/SDF-1alpha nor its coreceptor activity. As to expression, lymphocytes, macrophages, neutrophils, microglial cells and astrocytes. Found in spleen, thymus, bone marrow, lymph nodes and, at lower levels in brain, small intestine, stomach and kidney. CXCR4-A is predominant in all tissues tested. During embryonic development, high levels are detected in the endothelium of developing blood vessels and in many regions of the developing brain including the olfactory epithelium, olfactory bulb, hippocampus, cerebellum and spinal cord.

The protein localises to the cell membrane. It localises to the cell junction. The protein resides in the early endosome. It is found in the late endosome. Its subcellular location is the lysosome. Its function is as follows. Receptor for the C-X-C chemokine CXCL12/SDF-1 that transduces a signal by increasing intracellular calcium ion levels and enhancing MAPK1/MAPK3 activation. Involved in the AKT signaling cascade. Plays a role in regulation of cell migration, e.g. during wound healing. Acts as a receptor for extracellular ubiquitin; leading to enhanced intracellular calcium ions and reduced cellular cAMP levels. Binds bacterial lipopolysaccharide (LPS) et mediates LPS-induced inflammatory response, including TNF secretion by monocytes. Involved in hematopoiesis and in cardiac ventricular septum formation. Also plays an essential role in vascularization of the gastrointestinal tract, probably by regulating vascular branching and/or remodeling processes in endothelial cells. Involved in cerebellar development. In the CNS, could mediate hippocampal-neuron survival. This is C-X-C chemokine receptor type 4 (Cxcr4) from Mus musculus (Mouse).